Consider the following 76-residue polypeptide: ATP synthase subunit 9, mitochondrial (76 aa).

Residue Met-1 is modified to N-formylmethionine. Transmembrane regions (helical) follow at residues 14 to 34 (IATI…AALI) and 52 to 72 (ILGF…SFLL).

In terms of assembly, F-type ATP synthases have 2 components, the catalytic core F(1) and the membrane-embedded component F(0), linked together by a central stalk and a peripheral stalk. The central stalk, also called rotor shaft, is often seen as part of F(1). The peripheral stalk is seen as part of F(0). F(0) contains the membrane channel next to the rotor. F-type ATP synthases form dimers but each monomer functions independently in ATP generation. The dimer consists of 18 different polypeptides: ATP1 (subunit alpha, part of F(1), 3 molecules per monomer), ATP2 (subunit beta, part of F(1), 3 molecules per monomer), ATP3 (subunit gamma, part of the central stalk), ATP4 (subunit b, part of the peripheral stalk), ATP5/OSCP (subunit 5/OSCP, part of the peripheral stalk), ATP6 (subunit a, part of the peripheral stalk), ATP7 (subunit d, part of the peripheral stalk), ATP8 (subunit 8, part of the peripheral stalk), OLI1 (subunit c, part of the rotor, 10 molecules per monomer), ATP14 (subunit h, part of the peripheral stalk), ATP15 (subunit epsilon, part of the central stalk), ATP16 (subunit delta, part of the central stalk), ATP17 (subunit f, part of the peripheral stalk), ATP18 (subunit i/j, part of the peripheral stalk). Dimer-specific subunits are ATP19 (subunit k, at interface between monomers), ATP20 (subunit g, at interface between monomers), TIM11 (subunit e, at interface between monomers). Also contains subunit L.

The protein resides in the mitochondrion inner membrane. Its function is as follows. Mitochondrial membrane ATP synthase (F(1)F(0) ATP synthase or Complex V) produces ATP from ADP in the presence of a proton gradient across the membrane which is generated by electron transport complexes of the respiratory chain. F-type ATP synthases consist of two structural domains, F(1) - containing the extramembraneous catalytic core, and F(0) - containing the membrane proton channel, linked together by a central stalk and a peripheral stalk. During catalysis, ATP synthesis in the catalytic domain of F(1) is coupled via a rotary mechanism of the central stalk subunits to proton translocation. Part of the complex F(0) domain. A homomeric c-ring of 10 OLI1/ATP9 subunits is part of the complex rotary element. The chain is ATP synthase subunit 9, mitochondrial from Pichia angusta (Yeast).